We begin with the raw amino-acid sequence, 310 residues long: Nodulation protein D 1 (310 aa).

Residues 6–63 (LDLNLLVALDALMTERQLTAAARRINLSQPAMSAAIARLRNYFHDDLFVMQGRELILT) form the HTH lysR-type domain. The H-T-H motif DNA-binding region spans 23 to 42 (LTAAARRINLSQPAMSAAIA).

The protein belongs to the LysR transcriptional regulatory family.

In terms of biological role, nodD regulates the expression of the nodABCFE genes which encode other nodulation proteins. NodD is also a negative regulator of its own expression. Binds flavonoids as inducers. The chain is Nodulation protein D 1 (nodD1) from Neorhizobium galegae (Rhizobium galegae).